Here is a 207-residue protein sequence, read N- to C-terminus: Small ribosomal subunit protein uS4 (207 aa).

Positions 26–53 (KPFDVKTKKHAKAPGQHGQARGKQSEYS) are disordered. An S4 RNA-binding domain is found at 97–159 (SRLDNVVYRM…AKQQLRIKNA (63 aa)).

This sequence belongs to the universal ribosomal protein uS4 family. Part of the 30S ribosomal subunit. Contacts protein S5. The interaction surface between S4 and S5 is involved in control of translational fidelity.

Functionally, one of the primary rRNA binding proteins, it binds directly to 16S rRNA where it nucleates assembly of the body of the 30S subunit. With S5 and S12 plays an important role in translational accuracy. The polypeptide is Small ribosomal subunit protein uS4 (Acinetobacter baylyi (strain ATCC 33305 / BD413 / ADP1)).